The primary structure comprises 581 residues: Aspartate--tRNA ligase (581 aa).

L-aspartate is bound at residue glutamate 170. Positions 194–197 (QLFK) are aspartate. Arginine 216 is an L-aspartate binding site. Residues 216 to 218 (RDE) and glutamine 225 contribute to the ATP site. Position 440 (histidine 440) interacts with L-aspartate. Residue glutamate 469 coordinates ATP. Position 476 (arginine 476) interacts with L-aspartate. Residue 521-524 (GFDR) participates in ATP binding.

It belongs to the class-II aminoacyl-tRNA synthetase family. Type 1 subfamily. Homodimer.

It localises to the cytoplasm. The catalysed reaction is tRNA(Asp) + L-aspartate + ATP = L-aspartyl-tRNA(Asp) + AMP + diphosphate. Catalyzes the attachment of L-aspartate to tRNA(Asp) in a two-step reaction: L-aspartate is first activated by ATP to form Asp-AMP and then transferred to the acceptor end of tRNA(Asp). This chain is Aspartate--tRNA ligase, found in Thermosipho africanus (strain TCF52B).